We begin with the raw amino-acid sequence, 151 residues long: Aspartate carbamoyltransferase regulatory chain (151 aa).

Zn(2+) contacts are provided by C108, C113, C138, and C141.

This sequence belongs to the PyrI family. As to quaternary structure, contains catalytic and regulatory chains. The cofactor is Zn(2+).

Involved in allosteric regulation of aspartate carbamoyltransferase. This is Aspartate carbamoyltransferase regulatory chain from Pyrobaculum arsenaticum (strain DSM 13514 / JCM 11321 / PZ6).